The chain runs to 585 residues: Complement component C8 alpha chain (585 aa).

Positions 1–20 (MLVAAFFTLFLVTCQPAVTA) are cleaved as a signal peptide. A propeptide spanning residues 21–30 (QEKVNQRVNR) is cleaved from the precursor. Residues 38 to 91 (DCQLSSWSEWTDCFPCQDTKYRHRSLLQPNKFGGTICSGDIWDRASCYSPTACL) form the TSP type-1 1 domain. 7 disulfide bridges follow: Cys39–Cys74, Cys50–Cys84, Cys53–Cys90, Cys96–Cys108, Cys102–Cys121, Cys115–Cys130, and Cys140–Cys177. Residue Trp44 is glycosylated (C-linked (Man) tryptophan). One can recognise an LDL-receptor class A domain in the interval 94 to 132 (AQCGQDFQCKETGRCLKRHLVCNGENDCLDGSDEDNCED). Ca(2+) is bound by residues Leu113, Asn116, Glu118, Asp120, Asp126, and Glu127. Positions 136 to 499 (TESDCAQYDP…QYLMEFNACR (364 aa)) constitute an MACPF domain. 4 consecutive transmembrane segments (beta stranded) span residues 248–256 (AGVTISAGL), 259–266 (SPLLGTVG), 377–384 (GGFGEIQY), and 391–396 (AQGILS). A disulfide bridge connects residues Cys375 and Cys400. N-linked (GlcNAc...) asparagine glycosylation is present at Asn438. 4 disulfide bridges follow: Cys498–Cys545, Cys500–Cys516, Cys503–Cys518, and Cys520–Cys529. In terms of domain architecture, EGF-like spans 499–530 (RCGPCFNNGKPILEGTSCRCQCSLGLQGPACE). Residues 540–584 (DGHWSCWGSWSPCTAGTRERRRECNNPAPQNGGAPCPGWRVQTQA) enclose the TSP type-1 2 domain. C-linked (Man) tryptophan glycans are attached at residues Trp543, Trp546, and Trp549. 2 cysteine pairs are disulfide-bonded: Cys552/Cys585 and Cys563/Cys575.

The protein belongs to the complement C6/C7/C8/C9 family. As to quaternary structure, heterotrimer of 3 chains: alpha (C8A), beta (C8B) and gamma (C8G); the alpha and gamma chains are disulfide bonded. Component of the membrane attack complex (MAC), composed of complement C5b, C6, C7, C8A, C8B, C8G and multiple copies of the pore-forming subunit C9.

It is found in the secreted. Its subcellular location is the target cell membrane. Its activity is regulated as follows. Membrane attack complex (MAC) assembly is inhibited by CD59, thereby protecting self-cells from damage during complement activation. CD59 acts by binding to the beta-haipins of C8 (C8A and C8B), forming an intermolecular beta-sheet that prevents incorporation of the multiple copies of C9 required for complete formation of the osmolytic pore. MAC assembly is also inhibited by clusterin (CLU) chaperones that inhibit polymerization of C9. In terms of biological role, component of the membrane attack complex (MAC), a multiprotein complex activated by the complement cascade, which inserts into a target cell membrane and forms a pore, leading to target cell membrane rupture and cell lysis. The MAC is initiated by proteolytic cleavage of C5 into complement C5b in response to the classical, alternative, lectin and GZMK complement pathways. The complement pathways consist in a cascade of proteins that leads to phagocytosis and breakdown of pathogens and signaling that strengthens the adaptive immune system. C8A, together with C8B and C8G, inserts into the target membrane, but does not form pores by itself. During MAC assembly, associates with C5b, C6 and C7 to form the C5b8 intermediate complex that inserts into the target membrane and traverses the bilayer increasing membrane rigidity. The polypeptide is Complement component C8 alpha chain (C8A) (Oryctolagus cuniculus (Rabbit)).